The sequence spans 562 residues: Serine palmitoyltransferase 2 (562 aa).

The chain crosses the membrane as a helical span at residues 61-81; it reads LITYLNYLILIILGHIHDFLG. The residue at position 365 (Lys-365) is an N6-(pyridoxal phosphate)lysine.

It belongs to the class-II pyridoxal-phosphate-dependent aminotransferase family. Requires pyridoxal 5'-phosphate as cofactor.

The protein resides in the membrane. The enzyme catalyses L-serine + hexadecanoyl-CoA + H(+) = 3-oxosphinganine + CO2 + CoA. Its pathway is lipid metabolism; sphingolipid metabolism. The protein is Serine palmitoyltransferase 2 (LCB2) of Kluyveromyces lactis (strain ATCC 8585 / CBS 2359 / DSM 70799 / NBRC 1267 / NRRL Y-1140 / WM37) (Yeast).